Consider the following 285-residue polypeptide: Foldase protein PrsA 2 (285 aa).

The N-terminal stretch at 1–20 (MRGKHIFIITALISILMLAA) is a signal peptide. Residue Cys21 is the site of N-palmitoyl cysteine attachment. Cys21 carries the S-diacylglycerol cysteine lipid modification. The region spanning 134–224 (KPEIKASHIL…NGYHIIKLTG (91 aa)) is the PpiC domain.

It belongs to the PrsA family.

The protein localises to the cell membrane. It catalyses the reaction [protein]-peptidylproline (omega=180) = [protein]-peptidylproline (omega=0). In terms of biological role, plays a major role in protein secretion by helping the post-translocational extracellular folding of several secreted proteins. Important for the secretion of the protective antigen. The three PsrA proteins in this organism show different but overlapping substrate specificities. This Bacillus anthracis protein is Foldase protein PrsA 2 (prsA2).